Reading from the N-terminus, the 410-residue chain is MNFDTLKIADPEIYEVIQKETKRQRGNIELIASENFVTEAVMEAMGSQLTNKYAEGYPGKRYYGGCEEVDVAEDLARDRLKKLFNAEHANVQPHSGANANIGVYFAILKPGDTVLGMNLSHGGHLTHGSPVNISGTYYNFVDYGVDKETHLINYEEVRRIANEIKPKLIVAGASAFPRKIDFKKFREIADEVGAYLMVDMAHIAGLVAAGLHENPCDYADFVTTTTHKTLRGPRGGAILCKEKYAKMIDKAIFPGLQGGPLMHVIAAKAVSFKEALSPEFKAYQEQVIKNAAKLGEELKSRGFNLVSGGTDNHLLLLDLRNKNITGKDAEKLLDEVGVTVNKNTIPYDPESPFVTSGIRIGTPAVTTRGMKEDDMVTIAEIIGTIIDHPERIDEVSSMVKNLCEKFKLYE.

(6S)-5,6,7,8-tetrahydrofolate-binding positions include L119 and 123-125; that span reads GHL. K228 is subject to N6-(pyridoxal phosphate)lysine. Position 351–353 (351–353) interacts with (6S)-5,6,7,8-tetrahydrofolate; sequence SPF.

This sequence belongs to the SHMT family. Homodimer. The cofactor is pyridoxal 5'-phosphate.

The protein resides in the cytoplasm. The catalysed reaction is (6R)-5,10-methylene-5,6,7,8-tetrahydrofolate + glycine + H2O = (6S)-5,6,7,8-tetrahydrofolate + L-serine. Its pathway is one-carbon metabolism; tetrahydrofolate interconversion. It participates in amino-acid biosynthesis; glycine biosynthesis; glycine from L-serine: step 1/1. Its function is as follows. Catalyzes the reversible interconversion of serine and glycine with tetrahydrofolate (THF) serving as the one-carbon carrier. This reaction serves as the major source of one-carbon groups required for the biosynthesis of purines, thymidylate, methionine, and other important biomolecules. Also exhibits THF-independent aldolase activity toward beta-hydroxyamino acids, producing glycine and aldehydes, via a retro-aldol mechanism. The chain is Serine hydroxymethyltransferase from Alkaliphilus oremlandii (strain OhILAs) (Clostridium oremlandii (strain OhILAs)).